We begin with the raw amino-acid sequence, 442 residues long: 3-phosphoshikimate 1-carboxyvinyltransferase (442 aa).

3-phosphoshikimate contacts are provided by Lys23, Ser24, and Arg28. Lys23 contacts phosphoenolpyruvate. 2 residues coordinate phosphoenolpyruvate: Gly95 and Arg123. 4 residues coordinate 3-phosphoshikimate: Ser167, Gln169, Asp315, and Lys342. Gln169 provides a ligand contact to phosphoenolpyruvate. The active-site Proton acceptor is the Asp315. Phosphoenolpyruvate-binding residues include Arg346 and Arg390.

The protein belongs to the EPSP synthase family. Monomer.

Its subcellular location is the cytoplasm. The catalysed reaction is 3-phosphoshikimate + phosphoenolpyruvate = 5-O-(1-carboxyvinyl)-3-phosphoshikimate + phosphate. It participates in metabolic intermediate biosynthesis; chorismate biosynthesis; chorismate from D-erythrose 4-phosphate and phosphoenolpyruvate: step 6/7. In terms of biological role, catalyzes the transfer of the enolpyruvyl moiety of phosphoenolpyruvate (PEP) to the 5-hydroxyl of shikimate-3-phosphate (S3P) to produce enolpyruvyl shikimate-3-phosphate and inorganic phosphate. The chain is 3-phosphoshikimate 1-carboxyvinyltransferase from Dichelobacter nodosus (strain VCS1703A).